The primary structure comprises 413 residues: Serine protease inhibitor A3L (413 aa).

Positions 1–28 (MAFIAALGLLMAGICPAVLCDGTLGRDT) are cleaved as a signal peptide. A Phosphoserine modification is found at Ser30. Residues Asn102, Asn182, Asn220, and Asn267 are each glycosylated (N-linked (GlcNAc...) asparagine). The tract at residues 365-389 (GTEATAATGVATVIRRQPRTLNFNR) is RCL.

This sequence belongs to the serpin family. N-glycosylated. As to expression, liver.

Its subcellular location is the secreted. In Rattus norvegicus (Rat), this protein is Serine protease inhibitor A3L (Serpina3l).